A 91-amino-acid chain; its full sequence is Acyl-CoA-binding domain-containing protein 1 (91 aa).

Residues 3–88 enclose the ACB domain; it reads LQEDFEQYAE…VKQLLEEAAA (86 aa). An acyl-CoA is bound by residues Lys-15, 30–34, Lys-56, and Tyr-75; that span reads YGLYK.

This sequence belongs to the ACBP family. In terms of tissue distribution, highly expressed in leaves. Expressed at low levels in roots and seeds.

The protein resides in the cytoplasm. It is found in the cytosol. Functionally, binds medium- and long-chain acyl-CoA esters with high affinity. Can interact in vitro with palmitoyl-CoA, oleoyl-CoA, linoleoyl-CoA and linolenoyl-CoA. Binds phosphatidic acid (PA) and phosphatidylcholine (PC) in vitro. May play a role in the biosynthesis of phospholipids. The sequence is that of Acyl-CoA-binding domain-containing protein 1 from Oryza sativa subsp. japonica (Rice).